The chain runs to 335 residues: Glucokinase (335 aa).

11–16 (ADIGGT) provides a ligand contact to ATP.

This sequence belongs to the bacterial glucokinase family.

The protein resides in the cytoplasm. The enzyme catalyses D-glucose + ATP = D-glucose 6-phosphate + ADP + H(+). The chain is Glucokinase from Xanthomonas campestris pv. campestris (strain B100).